The sequence spans 225 residues: MTILLVTGTSTGVGKTVATAALAAAAVRQGIDVTVCKPVQTGDDHDAGEVARLSGVTRVQTLVRYPEPLAPVASASRAGLELLDHTQMATAIVALDRPGALTLVEGAGGLLVELAADGKTLRDLAMVLDAPVLVVTTADLGTLNHTALTLEALAVQSVPCAGLVVGSFPAEPDLAQRLNRENLANQFGTPVRAVIPEGAARLMPPVFAELSIELFEPQWVAGLVA.

12–17 (GVGKTV) lines the ATP pocket. Thr16 provides a ligand contact to Mg(2+). Lys37 is a catalytic residue. Thr41 provides a ligand contact to substrate. Residues Asp46, 105 to 108 (EGAG), 166 to 167 (GS), and 196 to 198 (PEG) contribute to the ATP site. The Mg(2+) site is built by Asp46 and Glu105.

It belongs to the dethiobiotin synthetase family. Homodimer. It depends on Mg(2+) as a cofactor.

The protein resides in the cytoplasm. The enzyme catalyses (7R,8S)-7,8-diammoniononanoate + CO2 + ATP = (4R,5S)-dethiobiotin + ADP + phosphate + 3 H(+). It functions in the pathway cofactor biosynthesis; biotin biosynthesis; biotin from 7,8-diaminononanoate: step 1/2. Catalyzes a mechanistically unusual reaction, the ATP-dependent insertion of CO2 between the N7 and N8 nitrogen atoms of 7,8-diaminopelargonic acid (DAPA, also called 7,8-diammoniononanoate) to form a ureido ring. This is ATP-dependent dethiobiotin synthetase BioD from Mycobacteroides abscessus (strain ATCC 19977 / DSM 44196 / CCUG 20993 / CIP 104536 / JCM 13569 / NCTC 13031 / TMC 1543 / L948) (Mycobacterium abscessus).